Consider the following 308-residue polypeptide: Energy-coupling factor transporter ATP-binding protein EcfA2 (308 aa).

An ABC transporter domain is found at 3–263; that stretch reads IEVKNISKVF…VDFLRENEME (261 aa). 40–47 contacts ATP; it reads GPTGSGKT.

This sequence belongs to the ABC transporter superfamily. Energy-coupling factor EcfA family. In terms of assembly, forms a stable energy-coupling factor (ECF) transporter complex composed of 2 membrane-embedded substrate-binding proteins (S component), 2 ATP-binding proteins (A component) and 2 transmembrane proteins (T component).

It localises to the cell membrane. In terms of biological role, ATP-binding (A) component of a common energy-coupling factor (ECF) ABC-transporter complex. Unlike classic ABC transporters this ECF transporter provides the energy necessary to transport a number of different substrates. This chain is Energy-coupling factor transporter ATP-binding protein EcfA2, found in Mycoplasma mobile (strain ATCC 43663 / 163K / NCTC 11711) (Mesomycoplasma mobile).